We begin with the raw amino-acid sequence, 587 residues long: Putative phagocytic receptor 1b (587 aa).

An N-terminal signal peptide occupies residues 1–23 (MRLQILLIYLICIIVSSIVLVES). 9 helical membrane-spanning segments follow: residues 223–243 (LSVM…AIMI), 294–314 (IGWQ…FGMF), 319–339 (GGNM…ISGY), 354–374 (AWNI…VVIL), 390–410 (ILTM…LTVV), 448–468 (ILIA…YIFN), 480–500 (GILC…TVAL), 524–544 (VVFI…MYGL), and 556–576 (IVCF…SLIF).

The protein belongs to the nonaspanin (TM9SF) (TC 9.A.2) family.

The protein resides in the membrane. Functionally, involved in adhesion and phagocytosis of hydrophilic particles. This chain is Putative phagocytic receptor 1b (phg1b), found in Dictyostelium discoideum (Social amoeba).